Here is a 620-residue protein sequence, read N- to C-terminus: Glutathione-regulated potassium-efflux system protein KefC (620 aa).

12 helical membrane passes run His-4–Val-24, Leu-26–Leu-46, Ser-54–Leu-74, Gly-90–Leu-110, Val-114–Met-134, Phe-149–Leu-169, Met-178–Leu-198, Val-218–Gly-238, Gly-270–Leu-290, Leu-294–Ile-314, Trp-327–Gln-347, and Ser-359–Asn-379. In terms of domain architecture, RCK N-terminal spans Gln-399–Thr-518. Residues Gly-597–Ser-620 are disordered.

The protein belongs to the monovalent cation:proton antiporter 2 (CPA2) transporter (TC 2.A.37) family. KefC subfamily. Homodimer. Interacts with the regulatory subunit KefF.

The protein resides in the cell inner membrane. Functionally, pore-forming subunit of a potassium efflux system that confers protection against electrophiles. Catalyzes K(+)/H(+) antiport. The polypeptide is Glutathione-regulated potassium-efflux system protein KefC (Escherichia coli O6:K15:H31 (strain 536 / UPEC)).